Consider the following 1383-residue polypeptide: ATP-dependent RNA helicase TDRD9 (1383 aa).

Positions 35-82 (EAPREEVQRSEEVPNEDPTAQAQVPVKATAPARPASTSGRSLSQRSSE) are disordered. Basic and acidic residues predominate over residues 36-46 (APREEVQRSEE). The segment covering 70-80 (STSGRSLSQRS) has biased composition (low complexity). Positions 144 to 310 (ISLIESNSVV…FAVPVQNKMN (167 aa)) constitute a Helicase ATP-binding domain. Residue 157-164 (GATGSGKS) coordinates ATP. The DEAH box motif lies at 256–259 (DEVH). Residues 378-545 (SGAQFVSERS…ILKVKLLDMG (168 aa)) enclose the Helicase C-terminal domain. Residues 945–1005 (HPHPDLVCLA…REIPCQFLEL (61 aa)) form the Tudor domain.

Belongs to the DEAD box helicase family. DEAH subfamily. As to quaternary structure, interacts with piRNA-associated proteins PIWIL1 and PIWIL4. As to expression, predominantly expressed in reproductive organs. Detected in mitotic spermatogonia, meiotic spermatocytes (predominantly at the pachytene stage), haploid spermatids in the testis, and in growing oocytes in the ovary (at protein level).

It is found in the cytoplasm. The protein localises to the nucleus. The enzyme catalyses ATP + H2O = ADP + phosphate + H(+). ATP-binding RNA helicase which plays a central role during spermatogenesis by repressing transposable elements and preventing their mobilization, which is essential for the germline integrity. Acts via the piRNA metabolic process, which mediates the repression of transposable elements during meiosis by forming complexes composed of piRNAs and Piwi proteins and governs the methylation and subsequent repression of transposons. Acts downstream of piRNA biogenesis: exclusively required for transposon silencing in the nucleus, suggesting that it acts as a nuclear effector in the nucleus together with PIWIL4. In Mus musculus (Mouse), this protein is ATP-dependent RNA helicase TDRD9.